Reading from the N-terminus, the 244-residue chain is uncharacterized protein (244 aa).

An HTH gntR-type domain is found at Val7–Phe74. The segment at residues Arg34–Val53 is a DNA-binding region (H-T-H motif).

This is an uncharacterized protein from Mycobacterium tuberculosis (strain CDC 1551 / Oshkosh).